Here is a 448-residue protein sequence, read N- to C-terminus: Phosphoglucosamine mutase (448 aa).

Residue S108 is the Phosphoserine intermediate of the active site. 4 residues coordinate Mg(2+): S108, D247, D249, and D251. A Phosphoserine modification is found at S108.

Belongs to the phosphohexose mutase family. Mg(2+) serves as cofactor. Activated by phosphorylation.

It carries out the reaction alpha-D-glucosamine 1-phosphate = D-glucosamine 6-phosphate. Catalyzes the conversion of glucosamine-6-phosphate to glucosamine-1-phosphate. The chain is Phosphoglucosamine mutase from Herminiimonas arsenicoxydans.